A 367-amino-acid chain; its full sequence is ADP-ribosylhydrolase ARH3 (367 aa).

Glu41, Thr79, Asp80, and Asp81 together coordinate Mg(2+). Position 80 (Asp80) interacts with substrate. Residues 149–155, His185, Leu238, and Ile274 contribute to the substrate site; that span reads KGSYGNG. Mg(2+)-binding residues include Asp317 and Thr320.

The protein belongs to the ADP-ribosylglycohydrolase family. Monomer. Mg(2+) is required as a cofactor.

Its subcellular location is the nucleus. The protein resides in the cytoplasm. It localises to the chromosome. It is found in the mitochondrion matrix. It catalyses the reaction [(1''-&gt;2')-ADP-alpha-D-ribose](n) + H2O = [(1''-&gt;2')-ADP-alpha-D-ribose](n-1) + ADP-D-ribose. The catalysed reaction is 1''-O-acetyl-ADP-alpha-D-ribose + H2O = ADP-D-ribose + acetate + H(+). The enzyme catalyses O-(ADP-D-ribosyl)-L-seryl-[protein] + H2O = ADP-D-ribose + L-seryl-[protein]. It carries out the reaction alpha-NAD(+) + H2O = ADP-D-ribose + nicotinamide + H(+). The protein undergoes a dramatic conformational switch from closed to open states upon substrate-binding, which enables specific substrate recognition for the 1''-O-linkage. The glutamate flap (Glu-41) blocks substrate entrance to Mg(2+) in the unliganded closed state. In presence of substrate, Glu-41 is ejected from the active site: this closed-to-open transition significantly widens the substrate-binding channel and precisely positions the scissile 1''-O-linkage for cleavage while securing tightly 2'- and 3'-hydroxyls of ADP-ribose. Functionally, ADP-ribosylhydrolase that preferentially hydrolyzes the scissile alpha-O-linkage attached to the anomeric C1'' position of ADP-ribose and acts on different substrates, such as proteins ADP-ribosylated on serine and threonine, free poly(ADP-ribose) and O-acetyl-ADP-D-ribose. Specifically acts as a serine mono-ADP-ribosylhydrolase by mediating the removal of mono-ADP-ribose attached to serine residues on proteins, thereby playing a key role in DNA damage response. Serine ADP-ribosylation of proteins constitutes the primary form of ADP-ribosylation of proteins in response to DNA damage. Does not hydrolyze ADP-ribosyl-arginine, -cysteine, -diphthamide, or -asparagine bonds. Also able to degrade protein free poly(ADP-ribose), which is synthesized in response to DNA damage: free poly(ADP-ribose) acts as a potent cell death signal and its degradation by ADPRHL2 protects cells from poly(ADP-ribose)-dependent cell death, a process named parthanatos. Also hydrolyzes free poly(ADP-ribose) in mitochondria. Specifically digests O-acetyl-ADP-D-ribose, a product of deacetylation reactions catalyzed by sirtuins. Specifically degrades 1''-O-acetyl-ADP-D-ribose isomer, rather than 2''-O-acetyl-ADP-D-ribose or 3''-O-acetyl-ADP-D-ribose isomers. The protein is ADP-ribosylhydrolase ARH3 (ADPRS) of Gallus gallus (Chicken).